The sequence spans 217 residues: Thiopurine S-methyltransferase (217 aa).

Residues Trp10, Leu45, Glu66, and Arg123 each coordinate S-adenosyl-L-methionine.

It belongs to the class I-like SAM-binding methyltransferase superfamily. TPMT family.

The protein localises to the cytoplasm. The catalysed reaction is S-adenosyl-L-methionine + a thiopurine = S-adenosyl-L-homocysteine + a thiopurine S-methylether.. The protein is Thiopurine S-methyltransferase of Pseudomonas fluorescens (strain Pf0-1).